The sequence spans 244 residues: Serine-rich single-pass membrane protein 1 (244 aa).

A helical transmembrane segment spans residues 35–55 (CGTIGSFLLWYFVIVFVLMFF). Disordered regions lie at residues 65 to 114 (DKKD…PVTN), 126 to 191 (QRRA…LGSY), and 210 to 244 (LAHH…FSKF). Positions 80–94 (ASKETSCKRQSKDSA) are enriched in basic and acidic residues. Polar residues-rich tracts occupy residues 96–114 (DPSQ…PVTN) and 132–142 (QSQFNEVNQNQ). Residues 161-176 (SWKESESEHHPSPDSI) are compositionally biased toward basic and acidic residues.

The protein resides in the membrane. The chain is Serine-rich single-pass membrane protein 1 (SSMEM1) from Homo sapiens (Human).